A 245-amino-acid polypeptide reads, in one-letter code: tRNA pseudouridine synthase A (245 aa).

Catalysis depends on aspartate 52, which acts as the Nucleophile. Tyrosine 111 provides a ligand contact to substrate.

The protein belongs to the tRNA pseudouridine synthase TruA family. In terms of assembly, homodimer.

It carries out the reaction uridine(38/39/40) in tRNA = pseudouridine(38/39/40) in tRNA. Formation of pseudouridine at positions 38, 39 and 40 in the anticodon stem and loop of transfer RNAs. The sequence is that of tRNA pseudouridine synthase A from Thermotoga petrophila (strain ATCC BAA-488 / DSM 13995 / JCM 10881 / RKU-1).